The following is an 88-amino-acid chain: MGKGTPSFGKRHNKSHTLCNRCGRRSFHVQKKTCSSCGYPAAKTRSYNWGAKAKRRHTTGTGRMRYLKHVSRRFKNGFQTGSASKASA.

Positions 19, 22, 34, and 37 each coordinate Zn(2+). A C4-type zinc finger spans residues 19–37; sequence CNRCGRRSFHVQKKTCSSC.

This sequence belongs to the eukaryotic ribosomal protein eL37 family. As to quaternary structure, component of the large ribosomal subunit (LSU). Mature yeast ribosomes consist of a small (40S) and a large (60S) subunit. The 40S small subunit contains 1 molecule of ribosomal RNA (18S rRNA) and 33 different proteins (encoded by 57 genes). The large 60S subunit contains 3 rRNA molecules (25S, 5.8S and 5S rRNA) and 46 different proteins (encoded by 81 genes). Zn(2+) serves as cofactor.

Its subcellular location is the cytoplasm. Functionally, component of the ribosome, a large ribonucleoprotein complex responsible for the synthesis of proteins in the cell. The small ribosomal subunit (SSU) binds messenger RNAs (mRNAs) and translates the encoded message by selecting cognate aminoacyl-transfer RNA (tRNA) molecules. The large subunit (LSU) contains the ribosomal catalytic site termed the peptidyl transferase center (PTC), which catalyzes the formation of peptide bonds, thereby polymerizing the amino acids delivered by tRNAs into a polypeptide chain. The nascent polypeptides leave the ribosome through a tunnel in the LSU and interact with protein factors that function in enzymatic processing, targeting, and the membrane insertion of nascent chains at the exit of the ribosomal tunnel. This Saccharomyces cerevisiae (strain ATCC 204508 / S288c) (Baker's yeast) protein is Large ribosomal subunit protein eL37A.